The primary structure comprises 938 residues: ATP-dependent RNA helicase DDX42 (938 aa).

Residues 1–18 (MNWNKGGPGTKRGFGFGG) are compositionally biased toward gly residues. The segment at 1–114 (MNWNKGGPGT…KPVDSDSDDD (114 aa)) is disordered. An N6-acetyllysine modification is found at Lys5. Arg12 is modified (omega-N-methylarginine). Low complexity predominate over residues 35-52 (SHSAFGATSSSSGFGKSA). Position 58 is a phosphoserine (Ser58). Residues 70 to 84 (DEENAYFEDEEEDSS) are compositionally biased toward acidic residues. Residues Ser96, Ser104, Ser109, and Ser111 each carry the phosphoserine modification. Positions 116–157 (LEAFMAEVEDQAARDMKRLEEKDKERKNVKGIRDDIEEEDDQ) form a coiled coil. The interval 182 to 203 (EYDSDGNPIAPTKKIIDPLPPI) is disordered. At Ser185 the chain carries Phosphoserine. The Q motif signature appears at 253–281 (SSFAHFGFDEQLMHQIRKSEYTQPTPIQC). One can recognise a Helicase ATP-binding domain in the interval 284-459 (VPVALSGRDM…RDILIDPIRV (176 aa)). 297 to 304 (AKTGSGKT) lines the ATP pocket. The DEAD box signature appears at 407 to 410 (DEAD). Residues 487-632 (WLTRRLVEFT…HVSKELLDLA (146 aa)) form the Helicase C-terminal domain. Polar residues-rich tracts occupy residues 737-757 (LNSV…SPVT) and 786-798 (GVNN…NSRE). The tract at residues 737–938 (LNSVPTNSAQ…PKRKKSRWDS (202 aa)) is disordered. The interval 738 to 833 (NSVPTNSAQQ…TGNRHSDSPR (96 aa)) is necessary for interaction with TP53BP2. Phosphoserine is present on Ser754. Positions 820 to 920 (SHGETGNRHS…KVDSKTDKTA (101 aa)) are enriched in basic and acidic residues. A Glycyl lysine isopeptide (Lys-Gly) (interchain with G-Cter in SUMO2) cross-link involves residue Lys899.

The protein belongs to the DEAD box helicase family. DDX42 subfamily. Transient component of the SF3B subcomplex of the 17S U2 SnRNP complex. Interacts (via the C-terminus) with TP53BP2; the interaction is not inhibitied by TP53BP2 ubiquitination and is independent of p53/TP53. In terms of tissue distribution, expressed in several cell lines (at protein level). Expressed in liver, lung, tonsil, thymus, muscle and pancreatic islets.

Its subcellular location is the cytoplasm. The protein resides in the nucleus. It localises to the cajal body. The protein localises to the nucleus speckle. The catalysed reaction is ATP + H2O = ADP + phosphate + H(+). Functionally, ATP-dependent RNA helicase that binds to partially double-stranded RNAs (dsRNAs) in order to unwind RNA secondary structures. Unwinding is promoted in the presence of single-strand binding proteins. Also mediates RNA duplex formation thereby displacing the single-strand RNA binding protein. ATP and ADP modulate its activity: ATP binding and hydrolysis by DDX42 triggers RNA strand separation, whereas the ADP-bound form of the protein triggers annealing of complementary RNA strands. Required for assembly of the 17S U2 SnRNP complex of the spliceosome, a large ribonucleoprotein complex that removes introns from transcribed pre-mRNAs: DDX42 associates transiently with the SF3B subcomplex of the 17S U2 SnRNP complex and is released after fulfilling its role in the assembly of 17S U2 SnRNP. Involved in the survival of cells by interacting with TP53BP2 and thereby counteracting the apoptosis-stimulating activity of TP53BP2. Relocalizes TP53BP2 to the cytoplasm. The protein is ATP-dependent RNA helicase DDX42 of Homo sapiens (Human).